Consider the following 588-residue polypeptide: Solute carrier family 2, facilitated glucose transporter member 12 (588 aa).

Over 1-28 (MLAHSTAQDLILQQRSSDDHPQTNPRQT) the chain is Cytoplasmic. A helical membrane pass occupies residues 29–49 (GCGAFIILSSVIAAISGLLVG). At 50–74 (YELGIISGALLQLQSLLELTCQQQE) the chain is on the extracellular side. A helical membrane pass occupies residues 75–95 (IVVSALLIGALVASLVGGCLI). The Cytoplasmic portion of the chain corresponds to 96 to 103 (DLYGRRTT). The helical transmembrane segment at 104-124 (IIFTSILLVFANLLPVVVVSY) threads the bilayer. Residues 125 to 131 (GSLIAGR) are Extracellular-facing. The chain crosses the membrane as a helical span at residues 132–152 (IFIGVSISLSAIATCVYIAEL). Residues 153 to 158 (SPQDKR) lie on the Cytoplasmic side of the membrane. A helical membrane pass occupies residues 159-179 (GMLVSLNELMIVAGILLAYIC). The Extracellular segment spans residues 180–191 (NYLFASVNNGWK). The helical transmembrane segment at 192–212 (YMFGLITPLAALQAVAMFFLP) threads the bilayer. At 213–272 (RSPRFLIMKGYDDAAGKVLQKLRATTDINEELTAIKSSIKAEYQYKFLDLFCSRDNMRAR) the chain is on the cytoplasmic side. The chain crosses the membrane as a helical span at residues 273–293 (LLIGLTLSFFVQITGQPNILF). The Extracellular segment spans residues 294 to 311 (YASTVLKSVGFQSTEAAS). Residues 312–332 (LASTGIGVVKVVSTIPAIFLV) form a helical membrane-spanning segment. The Cytoplasmic portion of the chain corresponds to 333–339 (DKIGSKT). Residues 340–360 (FLCIGSAVMAVSLVSVGLVSL) traverse the membrane as a helical segment. Over 361-459 (QLDVNYNNIC…IPEYMKWLCL (99 aa)) the chain is Extracellular. N-linked (GlcNAc...) asparagine glycosylation is found at asparagine 377, asparagine 395, and asparagine 419. Residues 460 to 480 (SSLLAFVAAFSIGLGPMAWLV) traverse the membrane as a helical segment. The Cytoplasmic portion of the chain corresponds to 481 to 492 (QSEIFPAGIKGR). A helical membrane pass occupies residues 493–513 (AFAITSSMNWGMNLLISLTFL). Residues 514 to 522 (TLTEMIGLP) are Extracellular-facing. A helical transmembrane segment spans residues 523-543 (WMLFGYALMSIASLVFVIMFV). Over 544 to 588 (PNTKGRPLEEISKELANRSYMCNAVCHRRRSKKKLTPVALIQSPA) the chain is Cytoplasmic.

The protein belongs to the major facilitator superfamily. Sugar transporter (TC 2.A.1.1) family. Glucose transporter subfamily.

The protein localises to the cell membrane. Its subcellular location is the endomembrane system. It is found in the cytoplasm. The protein resides in the perinuclear region. It carries out the reaction D-glucose(out) = D-glucose(in). Insulin-regulated facilitative glucose transporter. This Xenopus laevis (African clawed frog) protein is Solute carrier family 2, facilitated glucose transporter member 12.